Reading from the N-terminus, the 256-residue chain is Adenosine 5'-phosphosulfate reductase (256 aa).

C120, C121, C203, and C206 together coordinate [4Fe-4S] cluster. C231 (nucleophile; cysteine thiosulfonate intermediate) is an active-site residue.

Belongs to the PAPS reductase family. CysH subfamily. It depends on [4Fe-4S] cluster as a cofactor.

It is found in the cytoplasm. It carries out the reaction [thioredoxin]-disulfide + sulfite + AMP + 2 H(+) = adenosine 5'-phosphosulfate + [thioredoxin]-dithiol. The protein operates within sulfur metabolism; hydrogen sulfide biosynthesis; sulfite from sulfate. Its function is as follows. Catalyzes the formation of sulfite from adenosine 5'-phosphosulfate (APS) using thioredoxin as an electron donor. This is Adenosine 5'-phosphosulfate reductase from Allochromatium vinosum (strain ATCC 17899 / DSM 180 / NBRC 103801 / NCIMB 10441 / D) (Chromatium vinosum).